Here is a 101-residue protein sequence, read N- to C-terminus: Large ribosomal subunit protein eL21 (101 aa).

Over residues 1 to 18 (MVKHSKGYRTRSRSLLRK) the composition is skewed to basic residues. The interval 1–24 (MVKHSKGYRTRSRSLLRKSPRERG) is disordered.

It belongs to the eukaryotic ribosomal protein eL21 family.

The sequence is that of Large ribosomal subunit protein eL21 (rpl21e) from Saccharolobus solfataricus (strain ATCC 35092 / DSM 1617 / JCM 11322 / P2) (Sulfolobus solfataricus).